We begin with the raw amino-acid sequence, 401 residues long: Tyrosine--tRNA ligase (401 aa).

Residues 41-50 carry the 'HIGH' region motif; sequence PSRPDLHLGH. A 'KMSKS' region motif is present at residues 225 to 229; sequence KMSKS. K228 lines the ATP pocket. One can recognise an S4 RNA-binding domain in the interval 334 to 395; sequence KNIVDLLVEI…GKRKFYRISG (62 aa).

Belongs to the class-I aminoacyl-tRNA synthetase family. TyrS type 2 subfamily. In terms of assembly, homodimer.

The protein resides in the cytoplasm. The enzyme catalyses tRNA(Tyr) + L-tyrosine + ATP = L-tyrosyl-tRNA(Tyr) + AMP + diphosphate + H(+). Catalyzes the attachment of tyrosine to tRNA(Tyr) in a two-step reaction: tyrosine is first activated by ATP to form Tyr-AMP and then transferred to the acceptor end of tRNA(Tyr). In Thermotoga maritima (strain ATCC 43589 / DSM 3109 / JCM 10099 / NBRC 100826 / MSB8), this protein is Tyrosine--tRNA ligase.